Here is a 196-residue protein sequence, read N- to C-terminus: Recombination protein RecR (196 aa).

A C4-type zinc finger spans residues 57-72 (CERCHTFTQADICATC). The Toprim domain occupies 80–175 (SKLCVVETPA…RLTRLARGVP (96 aa)).

This sequence belongs to the RecR family.

Functionally, may play a role in DNA repair. It seems to be involved in an RecBC-independent recombinational process of DNA repair. It may act with RecF and RecO. This is Recombination protein RecR from Albidiferax ferrireducens (strain ATCC BAA-621 / DSM 15236 / T118) (Rhodoferax ferrireducens).